The primary structure comprises 216 residues: Adenylate kinase (216 aa).

10 to 15 (GAGKGT) contacts ATP. An NMP region spans residues 30 to 59 (STGDMLRAAVAAGTEVGKRAKAVMDAGKLV). AMP is bound by residues T31, R36, 57–59 (KLV), 85–88 (GFPR), and Q92. Residues 126 to 163 (GRYTCANCGAGYHDENLRPKVEGVCDRCGSTHFKRRAD) are LID. R127 contacts ATP. Zn(2+) contacts are provided by C130, C133, C150, and C153. The AMP site is built by R160 and R172. Residue A200 participates in ATP binding.

The protein belongs to the adenylate kinase family. As to quaternary structure, monomer.

It localises to the cytoplasm. The catalysed reaction is AMP + ATP = 2 ADP. It participates in purine metabolism; AMP biosynthesis via salvage pathway; AMP from ADP: step 1/1. Its function is as follows. Catalyzes the reversible transfer of the terminal phosphate group between ATP and AMP. Plays an important role in cellular energy homeostasis and in adenine nucleotide metabolism. This chain is Adenylate kinase, found in Rhizobium rhizogenes (strain K84 / ATCC BAA-868) (Agrobacterium radiobacter).